We begin with the raw amino-acid sequence, 330 residues long: Phenylalanine--tRNA ligase alpha subunit (330 aa).

Residue Glu257 coordinates Mg(2+).

This sequence belongs to the class-II aminoacyl-tRNA synthetase family. Phe-tRNA synthetase alpha subunit type 1 subfamily. Tetramer of two alpha and two beta subunits. It depends on Mg(2+) as a cofactor.

The protein resides in the cytoplasm. It carries out the reaction tRNA(Phe) + L-phenylalanine + ATP = L-phenylalanyl-tRNA(Phe) + AMP + diphosphate + H(+). This is Phenylalanine--tRNA ligase alpha subunit from Nostoc sp. (strain PCC 7120 / SAG 25.82 / UTEX 2576).